The primary structure comprises 323 residues: 4-hydroxy-3-methylbut-2-enyl diphosphate reductase (323 aa).

Residue Cys-13 coordinates [4Fe-4S] cluster. (2E)-4-hydroxy-3-methylbut-2-enyl diphosphate-binding residues include His-42 and His-75. Residues His-42 and His-75 each coordinate dimethylallyl diphosphate. 2 residues coordinate isopentenyl diphosphate: His-42 and His-75. Cys-97 contacts [4Fe-4S] cluster. His-125 contributes to the (2E)-4-hydroxy-3-methylbut-2-enyl diphosphate binding site. Position 125 (His-125) interacts with dimethylallyl diphosphate. His-125 contributes to the isopentenyl diphosphate binding site. Glu-127 serves as the catalytic Proton donor. Thr-168 is a (2E)-4-hydroxy-3-methylbut-2-enyl diphosphate binding site. Position 198 (Cys-198) interacts with [4Fe-4S] cluster. (2E)-4-hydroxy-3-methylbut-2-enyl diphosphate contacts are provided by Ser-226, Ser-227, Asn-228, and Ser-270. The dimethylallyl diphosphate site is built by Ser-226, Ser-227, Asn-228, and Ser-270. Positions 226, 227, 228, and 270 each coordinate isopentenyl diphosphate.

Belongs to the IspH family. The cofactor is [4Fe-4S] cluster.

The catalysed reaction is isopentenyl diphosphate + 2 oxidized [2Fe-2S]-[ferredoxin] + H2O = (2E)-4-hydroxy-3-methylbut-2-enyl diphosphate + 2 reduced [2Fe-2S]-[ferredoxin] + 2 H(+). The enzyme catalyses dimethylallyl diphosphate + 2 oxidized [2Fe-2S]-[ferredoxin] + H2O = (2E)-4-hydroxy-3-methylbut-2-enyl diphosphate + 2 reduced [2Fe-2S]-[ferredoxin] + 2 H(+). Its pathway is isoprenoid biosynthesis; dimethylallyl diphosphate biosynthesis; dimethylallyl diphosphate from (2E)-4-hydroxy-3-methylbutenyl diphosphate: step 1/1. It functions in the pathway isoprenoid biosynthesis; isopentenyl diphosphate biosynthesis via DXP pathway; isopentenyl diphosphate from 1-deoxy-D-xylulose 5-phosphate: step 6/6. Its function is as follows. Catalyzes the conversion of 1-hydroxy-2-methyl-2-(E)-butenyl 4-diphosphate (HMBPP) into a mixture of isopentenyl diphosphate (IPP) and dimethylallyl diphosphate (DMAPP). Acts in the terminal step of the DOXP/MEP pathway for isoprenoid precursor biosynthesis. The sequence is that of 4-hydroxy-3-methylbut-2-enyl diphosphate reductase from Nitrosomonas europaea (strain ATCC 19718 / CIP 103999 / KCTC 2705 / NBRC 14298).